Here is a 325-residue protein sequence, read N- to C-terminus: Interferon regulatory factor 1 (325 aa).

The segment at residues 5–113 (RMRMRPWLEM…SAVRVYRMLP (109 aa)) is a DNA-binding region (IRF tryptophan pentad repeat). Lys-78 bears the N6-acetyllysine mark. The disordered stretch occupies residues 92–165 (EEVKDQSRNK…TLPDDHSSYT (74 aa)). Residues 141–157 (GDSSPDTFSDGLSSSTL) show a composition bias toward polar residues. Residues Lys-275 and Lys-299 each participate in a glycyl lysine isopeptide (Lys-Gly) (interchain with G-Cter in SUMO) cross-link.

It belongs to the IRF family. Monomer. Homodimer. Interacts with EP300. Interacts with MYD88. Interacts with PIAS3. Interacts with SPOP. In terms of processing, phosphorylated by CK2 and this positively regulates its activity. Post-translationally, sumoylation represses the transcriptional activity and displays enhanced resistance to protein degradation. Sumoylated by UBE2I/UBC9 and SUMO1. Inactivates the tumor suppressor activity. Elevated levels in tumor cells. Major site is Lys-275. Sumoylation is enhanced by PIAS3. Desumoylated by SENP1 in tumor cells and appears to compete with ubiquitination on C-terminal sites. Ubiquitinated in a SPOP-depedent manner. Appears to compete with sumoylation on C-terminal sites.

The protein localises to the nucleus. It localises to the cytoplasm. Activated by MYD88. Functionally, transcriptional regulator which displays a remarkable functional diversity in the regulation of cellular responses. Regulates transcription of IFN and IFN-inducible genes, host response to viral and bacterial infections, regulation of many genes expressed during hematopoiesis, inflammation, immune responses and cell proliferation and differentiation, regulation of the cell cycle and induction of growth arrest and programmed cell death following DNA damage. Stimulates both innate and acquired immune responses through the activation of specific target genes and can act as a transcriptional activator and repressor regulating target genes by binding to an interferon-stimulated response element (ISRE) in their promoters. Has an essentail role in IFNG-dependent immunity to mycobacteria. Competes with the transcriptional repressor ZBED2 for binding to a common consensus sequence in gene promoters. Its target genes for transcriptional activation activity include: genes involved in anti-viral response, such as IFN-alpha/beta, RIGI, TNFSF10/TRAIL, ZBP1, OAS1/2, PIAS1/GBP, EIF2AK2/PKR and RSAD2/viperin; antibacterial response, such as GBP2, GBP5 and NOS2/INOS; anti-proliferative response, such as p53/TP53, LOX and CDKN1A; apoptosis, such as BBC3/PUMA, CASP1, CASP7 and CASP8; immune response, such as IL7, IL12A/B and IL15, PTGS2/COX2 and CYBB; DNA damage responses and DNA repair, such as POLQ/POLH; MHC class I expression, such as TAP1, PSMB9/LMP2, PSME1/PA28A, PSME2/PA28B and B2M and MHC class II expression, such as CIITA; metabolic enzymes, such as ACOD1/IRG1. Represses genes involved in anti-proliferative response, such as BIRC5/survivin, CCNB1, CCNE1, CDK1, CDK2 and CDK4 and in immune response, such as FOXP3, IL4, ANXA2 and TLR4. Stimulates p53/TP53-dependent transcription through enhanced recruitment of EP300 leading to increased acetylation of p53/TP53. Plays an important role in immune response directly affecting NK maturation and activity, macrophage production of IL12, Th1 development and maturation of CD8+ T-cells. Also implicated in the differentiation and maturation of dendritic cells and in the suppression of regulatory T (Treg) cells development. Acts as a tumor suppressor and plays a role not only in antagonism of tumor cell growth but also in stimulating an immune response against tumor cells. This is Interferon regulatory factor 1 (IRF1) from Homo sapiens (Human).